Consider the following 576-residue polypeptide: Apolipoprotein N-acyltransferase 1 (576 aa).

The next 7 membrane-spanning stretches (helical) occupy residues 15–35 (LILC…FSFF), 38–58 (GVFA…TSIW), 60–80 (AFLW…YWIP), 92–112 (FVSI…FFLF), 128–148 (YILL…FQIF), 168–188 (ICGV…FLIL), and 204–224 (IASL…IGYI). Residues 236-538 (LSVLMIQPDT…TGTRAFSIRL (303 aa)) form the CN hydrolase domain. Glutamate 285 acts as the Proton acceptor in catalysis. Residue lysine 355 is part of the active site. The active-site Nucleophile is the cysteine 446. Residues 549–569 (FGNSFLWIFCILILISRLIFV) form a helical membrane-spanning segment.

This sequence belongs to the CN hydrolase family. Apolipoprotein N-acyltransferase subfamily.

The protein localises to the cell inner membrane. It carries out the reaction N-terminal S-1,2-diacyl-sn-glyceryl-L-cysteinyl-[lipoprotein] + a glycerophospholipid = N-acyl-S-1,2-diacyl-sn-glyceryl-L-cysteinyl-[lipoprotein] + a 2-acyl-sn-glycero-3-phospholipid + H(+). It functions in the pathway protein modification; lipoprotein biosynthesis (N-acyl transfer). Catalyzes the phospholipid dependent N-acylation of the N-terminal cysteine of apolipoprotein, the last step in lipoprotein maturation. In Leptospira interrogans serogroup Icterohaemorrhagiae serovar Lai (strain 56601), this protein is Apolipoprotein N-acyltransferase 1.